A 77-amino-acid chain; its full sequence is Protein UL148C (77 aa).

Helical transmembrane passes span 10–30 and 35–55; these read VLYL…AVAV and IAWA…VGAA.

It localises to the host membrane. The sequence is that of Protein UL148C (UL148C) from Homo sapiens (Human).